The following is a 277-amino-acid chain: Tetrahydroxynaphthalene reductase PfmaG (277 aa).

Residues Ile36, Asp82, and Asn109 each coordinate NADP(+). Catalysis depends on proton donor residues Ser158, Ser159, and Tyr173. The NADP(+) site is built by Tyr173, Lys177, Ile206, and Thr208. Catalysis depends on Lys177, which acts as the Lowers pKa of active site Tyr.

It belongs to the short-chain dehydrogenases/reductases (SDR) family.

It carries out the reaction scytalone + NADP(+) = naphthalene-1,3,6,8-tetrol + NADPH + H(+). The protein operates within pigment biosynthesis; melanin biosynthesis. In terms of biological role, tetrahydroxynaphthalene reductase; part of the gene cluster that mediates the biosynthesis of dihydroxynaphthalene (DHN)-melanin, a bluish-green pigment forming a dark layer in the conidial wall that protects the conidia from UV radiations. The first step of the pathway is the production of the pentaketide 1,3,6,8-tetrahydroxynaphthalene (1,3,6,8-THN or T4HN) by the polyketide synthase PfmaE though condensation of acetyl-CoA with malonyl-CoA. T4HN is not stable and easily oxidizes into the stable form flaviolin. T4HN is also substrate of the hydroxynaphthalene reductase PfmaG to yield scytalone. The scytalone dehydratase PfmaJ then reduces scytalone to 1,3,8-THN. 1,3,8-THN is then substrate of the hydroxynaphthalene reductase PfmaI to yield vermelone. Vermelone is further converted by the multicopper oxidase PfmaD to 1,8-DHN. Finally the laccase PFICI_06862 transforms 1,8-DHN to DHN-melanin. The roles of the 5-oxoprolinase PfmaA and the proline iminopeptidase PfmaB within the cluster have not been elucidated yet. The protein is Tetrahydroxynaphthalene reductase PfmaG of Pestalotiopsis fici (strain W106-1 / CGMCC3.15140).